The following is a 161-amino-acid chain: 2-C-methyl-D-erythritol 2,4-cyclodiphosphate synthase (161 aa).

The a divalent metal cation site is built by aspartate 9 and histidine 11. Residues 9 to 11 (DFH) and 37 to 38 (HS) each bind 4-CDP-2-C-methyl-D-erythritol 2-phosphate. Histidine 45 provides a ligand contact to a divalent metal cation. 4-CDP-2-C-methyl-D-erythritol 2-phosphate contacts are provided by residues 59-61 (DIG), 64-68 (FPDTD), 135-138 (TTTE), and arginine 145.

Belongs to the IspF family. Homotrimer. The cofactor is a divalent metal cation.

It catalyses the reaction 4-CDP-2-C-methyl-D-erythritol 2-phosphate = 2-C-methyl-D-erythritol 2,4-cyclic diphosphate + CMP. The protein operates within isoprenoid biosynthesis; isopentenyl diphosphate biosynthesis via DXP pathway; isopentenyl diphosphate from 1-deoxy-D-xylulose 5-phosphate: step 4/6. Its function is as follows. Involved in the biosynthesis of isopentenyl diphosphate (IPP) and dimethylallyl diphosphate (DMAPP), two major building blocks of isoprenoid compounds. Catalyzes the conversion of 4-diphosphocytidyl-2-C-methyl-D-erythritol 2-phosphate (CDP-ME2P) to 2-C-methyl-D-erythritol 2,4-cyclodiphosphate (ME-CPP) with a corresponding release of cytidine 5-monophosphate (CMP). The polypeptide is 2-C-methyl-D-erythritol 2,4-cyclodiphosphate synthase (Leptospira interrogans serogroup Icterohaemorrhagiae serovar Lai (strain 56601)).